Consider the following 292-residue polypeptide: Formamidopyrimidine-DNA glycosylase (292 aa).

Pro2 acts as the Schiff-base intermediate with DNA in catalysis. The active-site Proton donor is Glu3. The active-site Proton donor; for beta-elimination activity is the Lys58. 3 residues coordinate DNA: His98, Arg128, and Arg173. An FPG-type zinc finger spans residues 258–292 (LVYDRAGQPCRVCATPVRQIVQGQRSTFYCPNCQH). The active-site Proton donor; for delta-elimination activity is Arg282.

It belongs to the FPG family. As to quaternary structure, monomer. Zn(2+) serves as cofactor.

The enzyme catalyses Hydrolysis of DNA containing ring-opened 7-methylguanine residues, releasing 2,6-diamino-4-hydroxy-5-(N-methyl)formamidopyrimidine.. It carries out the reaction 2'-deoxyribonucleotide-(2'-deoxyribose 5'-phosphate)-2'-deoxyribonucleotide-DNA = a 3'-end 2'-deoxyribonucleotide-(2,3-dehydro-2,3-deoxyribose 5'-phosphate)-DNA + a 5'-end 5'-phospho-2'-deoxyribonucleoside-DNA + H(+). Involved in base excision repair of DNA damaged by oxidation or by mutagenic agents. Acts as a DNA glycosylase that recognizes and removes damaged bases. Has a preference for oxidized purines, such as 7,8-dihydro-8-oxoguanine (8-oxoG). Has AP (apurinic/apyrimidinic) lyase activity and introduces nicks in the DNA strand. Cleaves the DNA backbone by beta-delta elimination to generate a single-strand break at the site of the removed base with both 3'- and 5'-phosphates. This Cupriavidus necator (strain ATCC 17699 / DSM 428 / KCTC 22496 / NCIMB 10442 / H16 / Stanier 337) (Ralstonia eutropha) protein is Formamidopyrimidine-DNA glycosylase.